The chain runs to 316 residues: Transaldolase (316 aa).

Lys132 (schiff-base intermediate with substrate) is an active-site residue.

The protein belongs to the transaldolase family. Type 1 subfamily. Homodimer.

It localises to the cytoplasm. The enzyme catalyses D-sedoheptulose 7-phosphate + D-glyceraldehyde 3-phosphate = D-erythrose 4-phosphate + beta-D-fructose 6-phosphate. It participates in carbohydrate degradation; pentose phosphate pathway; D-glyceraldehyde 3-phosphate and beta-D-fructose 6-phosphate from D-ribose 5-phosphate and D-xylulose 5-phosphate (non-oxidative stage): step 2/3. In terms of biological role, transaldolase is important for the balance of metabolites in the pentose-phosphate pathway. In Marinomonas sp. (strain MWYL1), this protein is Transaldolase.